Reading from the N-terminus, the 324-residue chain is Acetyl-coenzyme A carboxylase carboxyl transferase subunit alpha (324 aa).

Residues 37-291 form the CoA carboxyltransferase C-terminal domain; it reads ILEDKLENLE…DLMIRKTFEQ (255 aa).

Belongs to the AccA family. In terms of assembly, acetyl-CoA carboxylase is a heterohexamer composed of biotin carboxyl carrier protein (AccB), biotin carboxylase (AccC) and two subunits each of ACCase subunit alpha (AccA) and ACCase subunit beta (AccD).

The protein resides in the cytoplasm. The catalysed reaction is N(6)-carboxybiotinyl-L-lysyl-[protein] + acetyl-CoA = N(6)-biotinyl-L-lysyl-[protein] + malonyl-CoA. It functions in the pathway lipid metabolism; malonyl-CoA biosynthesis; malonyl-CoA from acetyl-CoA: step 1/1. Its function is as follows. Component of the acetyl coenzyme A carboxylase (ACC) complex. First, biotin carboxylase catalyzes the carboxylation of biotin on its carrier protein (BCCP) and then the CO(2) group is transferred by the carboxyltransferase to acetyl-CoA to form malonyl-CoA. The polypeptide is Acetyl-coenzyme A carboxylase carboxyl transferase subunit alpha (Bacillus cereus (strain G9842)).